A 134-amino-acid polypeptide reads, in one-letter code: ATP synthase epsilon chain (134 aa).

Belongs to the ATPase epsilon chain family. As to quaternary structure, F-type ATPases have 2 components, CF(1) - the catalytic core - and CF(0) - the membrane proton channel. CF(1) has five subunits: alpha(3), beta(3), gamma(1), delta(1), epsilon(1). CF(0) has three main subunits: a, b and c.

The protein resides in the cell membrane. Its function is as follows. Produces ATP from ADP in the presence of a proton gradient across the membrane. The chain is ATP synthase epsilon chain from Listeria innocua serovar 6a (strain ATCC BAA-680 / CLIP 11262).